Consider the following 883-residue polypeptide: Lysine-specific demethylase JMJ29 (883 aa).

Disordered regions lie at residues 30–62 and 161–204; these read KPFM…SAVK and RTHS…SRKQ. Over residues 34-43 the composition is skewed to low complexity; that stretch reads SKGSSPSSSS. 2 stretches are compositionally biased toward polar residues: residues 161–172 and 184–204; these read RTHSLSANSPEN and SPAS…SRKQ. Zn(2+) is bound by residues cysteine 209, cysteine 212, cysteine 223, cysteine 226, cysteine 232, cysteine 235, cysteine 252, cysteine 255, cysteine 338, cysteine 341, cysteine 363, and histidine 381. The segment at 209–256 adopts an RING-type; degenerate zinc-finger fold; that stretch reads CHQCLKGERITLLICSECEKTMFCLQCIRKWYPNLSEDDVVEKCPLCR. The B box-type; atypical zinc finger occupies 333 to 392; it reads DERVYCDHCATSIVDLHRSCPKCSYELCLKCCQEIREGSLSERPEMKFHYVDRGHRYMHG. A JmjC domain is found at 632–863; it reads PRTGILNIAT…ECLRLTEEFR (232 aa). Fe cation contacts are provided by histidine 676 and aspartate 678. Residues 713 to 743 are disordered; the sequence is NKVDKQSTEDCNEKEEEEEEELNMPEISSNE. A compositionally biased stretch (acidic residues) spans 722 to 735; it reads DCNEKEEEEEEELN. Residues 755-762 carry the Nuclear localization signal motif; the sequence is FRREDVPK. Histidine 831 contacts Fe cation.

Belongs to the JARID1 histone demethylase family. It depends on Fe(2+) as a cofactor. As to expression, expressed in inflorescences, roots, siliques, leaves and stems.

It localises to the nucleus. Its function is as follows. May function as histone H3 lysine demethylase and be involved in regulation of gene expression. The protein is Lysine-specific demethylase JMJ29 of Arabidopsis thaliana (Mouse-ear cress).